Here is a 659-residue protein sequence, read N- to C-terminus: Hemocyanin subunit B (659 aa).

The first 18 residues, Met-1–Ala-18, serve as a signal peptide directing secretion. The Cu cation site is built by His-198, His-202, and His-232. N-linked (GlcNAc...) asparagine glycosylation is present at Asn-318. Cu cation contacts are provided by His-353, His-357, and His-393. The cysteines at positions 562 and 609 are disulfide-linked.

This sequence belongs to the tyrosinase family. Hemocyanin subfamily. As to quaternary structure, 36-chain polymer consisting of 6 hexamers, each of which includes 4 different chains, A, B, C and D. Hemolymph.

The protein resides in the secreted. It localises to the extracellular space. In terms of biological role, hemocyanins are copper-containing oxygen carriers occurring freely dissolved in the hemolymph of many mollusks and arthropods. The protein is Hemocyanin subunit B (HCB) of Scutigera coleoptrata (House centipede).